Consider the following 272-residue polypeptide: HMP-PP phosphatase (272 aa).

Catalysis depends on D8, which acts as the Nucleophile. Positions 8, 10, and 212 each coordinate Mg(2+).

Belongs to the HAD-like hydrolase superfamily. Cof family. Requires Mg(2+) as cofactor.

The enzyme catalyses 4-amino-2-methyl-5-(diphosphooxymethyl)pyrimidine + H2O = 4-amino-2-methyl-5-(phosphooxymethyl)pyrimidine + phosphate + H(+). Its function is as follows. Catalyzes the hydrolysis of 4-amino-2-methyl-5-hydroxymethylpyrimidine pyrophosphate (HMP-PP) to 4-amino-2-methyl-5-hydroxymethylpyrimidine phosphate (HMP-P). This Escherichia coli O8 (strain IAI1) protein is HMP-PP phosphatase.